The sequence spans 337 residues: Viral cathepsin (337 aa).

The signal sequence occupies residues 1–18; sequence MYLIYYYTIIAVATASIA. Positions 19–126 are cleaved as a propeptide — activation peptide; it reads NEKIFYDIDS…VTVAGPSART (108 aa). Cystine bridges form between Cys-147/Cys-188, Cys-181/Cys-221, and Cys-276/Cys-324. The active site involves Cys-150. Catalysis depends on residues His-283 and Asn-303.

The protein belongs to the peptidase C1 family. Post-translationally, synthesized as an inactive proenzyme and activated by proteolytic removal of the inhibitory propeptide.

It catalyses the reaction Endopeptidase of broad specificity, hydrolyzing substrates of both cathepsin L and cathepsin B.. In terms of biological role, cysteine protease that plays an essential role in host liquefaction to facilitate horizontal transmission of the virus. May participate in the degradation of foreign protein expressed by the baculovirus system. The polypeptide is Viral cathepsin (VCATH) (Spodoptera litura multicapsid nucleopolyhedrovirus (SpltMNPV)).